Reading from the N-terminus, the 468-residue chain is 6-phosphogluconate dehydrogenase, NAD(+)-dependent, decarboxylating (468 aa).

NAD(+) is bound by residues 9–14 (GLGVMG), 32–34 (NYT), 73–75 (VTA), and N101. Substrate is bound by residues N101 and 127-129 (SGG). The active-site Proton acceptor is K181. 184–185 (HN) is a substrate binding site. E188 serves as the catalytic Proton donor. Substrate is bound by residues Y189, K259, R286, R445, and H451.

This sequence belongs to the 6-phosphogluconate dehydrogenase family. As to quaternary structure, homodimer.

The enzyme catalyses 6-phospho-D-gluconate + NAD(+) = D-ribulose 5-phosphate + CO2 + NADH. Functionally, catalyzes the oxidative decarboxylation of 6-phosphogluconate to ribulose 5-phosphate and CO(2), with concomitant reduction of NAD to NADH. Does not contribute to oxidative pentose phosphate (PP) pathway fluxes during growth on glucose. The functional role of GntZ remains obscure. The polypeptide is 6-phosphogluconate dehydrogenase, NAD(+)-dependent, decarboxylating (gntZ) (Bacillus subtilis (strain 168)).